We begin with the raw amino-acid sequence, 236 residues long: Outer membrane protein P.III (236 aa).

Positions 1–22 are cleaved as a signal peptide; that stretch reads MTKQLKLSALFVALLASGTAVA. 4 consecutive repeat copies span residues 69-70, 71-72, 73-74, and 75-76. The interval 69–76 is 4 X 2 AA tandem repeats of X-P; that stretch reads VPEPEPAP. The OmpA-like domain maps to 86 to 223; the sequence is YVDETISLSA…RVDVKIRSIV (138 aa). Residues Cys185 and Cys208 are joined by a disulfide bond.

It belongs to the outer membrane OOP (TC 1.B.6) superfamily.

It is found in the cell outer membrane. The sequence is that of Outer membrane protein P.III from Neisseria gonorrhoeae.